Here is a 72-residue protein sequence, read N- to C-terminus: Penaeidin-2b (72 aa).

A signal peptide spans 1–21 (MRLVVCLVFLASFALVCQGEA). 3 cysteine pairs are disulfide-bonded: Cys45-Cys59, Cys48-Cys66, and Cys60-Cys67. Position 71 is a lysine amide (Lys71).

This sequence belongs to the penaeidin family.

Its subcellular location is the cytoplasmic granule. Antibacterial and antifungal activity. Presents chitin-binding activity. The protein is Penaeidin-2b of Penaeus vannamei (Whiteleg shrimp).